Here is a 554-residue protein sequence, read N- to C-terminus: Bifunctional epoxide hydrolase 2 (554 aa).

A phosphatase region spans residues 1 to 224; the sequence is MALRVAAFDL…KVTGTQFPEA (224 aa). Positions 9 and 11 each coordinate Mg(2+). Position 55 is an N6-succinyllysine (Lys-55). 123 to 124 contacts phosphate; the sequence is TN. Lys-176 carries the post-translational modification N6-acetyllysine; alternate. Lys-176 is subject to N6-succinyllysine; alternate. Residue Asp-185 coordinates Mg(2+). N6-acetyllysine occurs at positions 191 and 215. The interval 233 to 554 is epoxide hydrolase; sequence NDVSHGYVTV…IQNPSVTSKI (322 aa). Residues 257-530 enclose the AB hydrolase-1 domain; it reads PAICLCHGFP…CGHWTQIEKP (274 aa). Residue Asp-333 is the Nucleophile of the active site. Position 368 is a phosphoserine (Ser-368). Position 381 (Tyr-381) interacts with substrate. N6-succinyllysine occurs at positions 420 and 454. Tyr-465 (proton donor) is an active-site residue. Lys-504 bears the N6-succinyllysine mark. Cys-521 carries S-(15-deoxy-Delta12,14-prostaglandin J2-9-yl)cysteine lipidation. His-523 functions as the Proton acceptor in the catalytic mechanism. The Microbody targeting signal signature appears at 552–554; that stretch reads SKI. At Lys-553 the chain carries N6-succinyllysine.

Belongs to the AB hydrolase superfamily. Epoxide hydrolase family. In terms of assembly, homodimer. Requires Mg(2+) as cofactor. The covalent modification of cysteine by 15-deoxy-Delta12,14-prostaglandin-J2 is autocatalytic and reversible. It may occur as an alternative to other cysteine modifications, such as S-nitrosylation and S-palmitoylation.

The protein resides in the cytoplasm. Its subcellular location is the peroxisome. The enzyme catalyses an epoxide + H2O = an ethanediol. It carries out the reaction (9S,10S)-10-hydroxy-9-(phosphooxy)octadecanoate + H2O = (9S,10S)-9,10-dihydroxyoctadecanoate + phosphate. The catalysed reaction is 8-hydroxy-(11S,12S)-epoxy-(5Z,9E,14Z)-eicosatrienoate + H2O = (8,11R,12S)-trihydroxy-(5Z,9E,14Z)-eicosatrienoate. It catalyses the reaction 10-hydroxy-(11S,12S)-epoxy- (5Z,8Z,14Z)-eicosatrienoate + H2O = (10,11S,12R)-trihydroxy-(5Z,8Z,14Z)-eicosatrienoate. The enzyme catalyses 12-phosphooxy-(9Z)-octadecenoate + H2O = 12-hydroxy-(9Z)-octadecenoate + phosphate. It carries out the reaction 12-phosphooxy-(9E)-octadecenoate + H2O = 12-hydroxy-(9E)-octadecenoate + phosphate. The catalysed reaction is 12-(phosphooxy)octadecanoate + H2O = 12-hydroxyoctadecanoate + phosphate. It catalyses the reaction 8,9-epoxy-(5Z,11Z,14Z)-eicosatrienoate + H2O = 8,9-dihydroxy-(5Z,11Z,14Z)-eicosatrienoate. The enzyme catalyses 11,12-epoxy-(5Z,8Z,14Z)-eicosatrienoate + H2O = 11,12-dihydroxy-(5Z,8Z,14Z)-eicosatrienoate. It carries out the reaction 14,15-epoxy-(5Z,8Z,11Z)-eicosatrienoate + H2O = 14,15-dihydroxy-(5Z,8Z,11Z)-eicosatrienoate. The catalysed reaction is 9,10-epoxy-(12Z)-octadecenoate + H2O = 9,10-dihydroxy-(12Z)-octadecenoate. It catalyses the reaction 1-tetradecanoyl-sn-glycerol 3-phosphate + H2O = 1-tetradecanoyl-sn-glycerol + phosphate. The enzyme catalyses 1-octadecanoyl-sn-glycero-3-phosphate + H2O = 1-octadecanoyl-sn-glycerol + phosphate. It carries out the reaction 1-(5Z,8Z,11Z,14Z-eicosatetraenoyl)-sn-glycero-3-phosphate + H2O = 1-(5Z,8Z,11Z,14Z-eicosatetraenoyl)-sn-glycerol + phosphate. The catalysed reaction is 1-hexadecanoyl-sn-glycero-3-phosphate + H2O = 1-hexadecanoyl-sn-glycerol + phosphate. It catalyses the reaction 1-(9Z-octadecenoyl)-sn-glycero-3-phosphate + H2O = 1-(9Z-octadecenoyl)-sn-glycerol + phosphate. The enzyme catalyses (8S,9R)-epoxy-(5Z,11Z,14Z)-eicosatrienoate + H2O = (8S,9S)-dihydroxy-(5Z,11Z,14Z)-eicosatrienoate. It carries out the reaction (11S,12R)-epoxy-(5Z,8Z,14Z)-eicosatrienoate + H2O = (11R,12R)-dihydroxy-(5Z,8Z,14Z)-eicosatrienoate. The catalysed reaction is (11S,12R)-epoxy-(5Z,8Z,14Z)-eicosatrienoate + H2O = (11S,12S)-dihydroxy-(5Z,8Z,14Z)-eicosatrienoate. It catalyses the reaction (14S,15R)-epoxy-(5Z,8Z,11Z)-eicosatrienoate + H2O = (14R,15R)-dihydroxy-(5Z,8Z,11Z)-eicosatrienoate. The enzyme catalyses (14S,15R)-epoxy-(5Z,8Z,11Z)-eicosatrienoate + H2O = (14S,15S)-dihydroxy-(5Z,8Z,11Z)-eicosatrienoate. It carries out the reaction (11R,12S)-epoxy-(5Z,8Z,14Z)-eicosatrienoate + H2O = (11S,12S)-dihydroxy-(5Z,8Z,14Z)-eicosatrienoate. The catalysed reaction is (11R,12S)-epoxy-(5Z,8Z,14Z)-eicosatrienoate + H2O = (11R,12R)-dihydroxy-(5Z,8Z,14Z)-eicosatrienoate. It catalyses the reaction (8S,9R)-epoxy-(5Z,11Z,14Z)-eicosatrienoate + H2O = (8R,9R)-dihydroxy-(5Z,11Z,14Z)-eicosatrienoate. The enzyme catalyses (14R,15S)-epoxy-(5Z,8Z,11Z)-eicosatrienoate + H2O = (14R,15R)-dihydroxy-(5Z,8Z,11Z)-eicosatrienoate. With respect to regulation, inhibited by 1-(1-acetylpiperidin-4-yl)-3-(4-(trifl uoromethoxy)phenyl)urea (TPAU), 1-cyclohexyl-3-dodecylurea (CDU), 12-(3-adamantan-1-yl-ureido)-dodecanoic acid (AUDA), 1-((3S, 5S, 7S)-adamantan-1-yl)-3-(5-(2-(2-ethoxyethoxy) ethoxy)pentyl)urea (AEPU), N-adamantyl-N[']-cyclohexyl urea (ACU), 4-(((1S, 4S)-4-(3-((3S, 5S, 7S)-adamantan-1-yl) ureido)cyclohexyl)oxy)benzoic acid (c-AUCB), 4-(((1R, 4R)-4-(3-((3S, 5S, 7S)-adamantan-1-yl)ureido)cyclohexyl)oxy)benzoic acid (t-AUCB), 4-(((1R, 4R)-4-(3-(4(trifluoromethoxy)phenyl)ureido)cyclohexyl)oxy)benzoic acid (t-TAUCB) and to a lesser extent by 8-(3-((3S, 5S, 7S)-adamantan-1-yl)ureido) octanoic acid (AUOA). Phosphatase activity is inhibited by dodecyl-phosphate, phospholipids such as phospho-lysophosphatidic acids and fatty acids such as palmitic acid and lauric acid. In terms of biological role, bifunctional enzyme. The C-terminal domain has epoxide hydrolase activity and acts on epoxides (alkene oxides, oxiranes) and arene oxides. Plays a role in xenobiotic metabolism by degrading potentially toxic epoxides. Also determines steady-state levels of physiological mediators. The N-terminal domain has lipid phosphatase activity, with the highest activity towards threo-9,10-phosphonooxy-hydroxy-octadecanoic acid, followed by erythro-9,10-phosphonooxy-hydroxy-octadecanoic acid, 12-phosphonooxy-octadec-9Z-enoic acid and 12-phosphonooxy-octadec-9E-enoic acid. Functionally, bifunctional enzyme. The C-terminal domain has epoxide hydrolase activity and acts on epoxides (alkene oxides, oxiranes) and arene oxides. Plays a role in xenobiotic metabolism by degrading potentially toxic epoxides. Also determines steady-state levels of physiological mediators. Bifunctional enzyme. The N-terminal domain has lipid phosphatase activity, with the highest activity towards threo-9,10-phosphonooxy-hydroxy-octadecanoic acid, followed by erythro-9,10-phosphonooxy-hydroxy-octadecanoic acid, 12-phosphonooxy-octadec-9Z-enoic acid and 12-phosphonooxy-octadec-9E-enoic acid. Has phosphatase activity toward lyso-glycerophospholipids with also some lower activity toward lysolipids of sphingolipid and isoprenoid phosphates. This is Bifunctional epoxide hydrolase 2 from Rattus norvegicus (Rat).